Here is a 337-residue protein sequence, read N- to C-terminus: Adenosine deaminase (337 aa).

The Zn(2+) site is built by His15 and His17. His17, Asp19, and Gly172 together coordinate substrate. His199 serves as a coordination point for Zn(2+). Glu202 functions as the Proton donor in the catalytic mechanism. Residue Asp279 participates in Zn(2+) binding.

This sequence belongs to the metallo-dependent hydrolases superfamily. Adenosine and AMP deaminases family. Adenosine deaminase subfamily. Zn(2+) serves as cofactor.

It catalyses the reaction adenosine + H2O + H(+) = inosine + NH4(+). The enzyme catalyses 2'-deoxyadenosine + H2O + H(+) = 2'-deoxyinosine + NH4(+). Its function is as follows. Catalyzes the hydrolytic deamination of adenosine and 2-deoxyadenosine. The sequence is that of Adenosine deaminase from Enterococcus faecalis (strain ATCC 700802 / V583).